We begin with the raw amino-acid sequence, 608 residues long: DNA mismatch repair protein MutL (608 aa).

The protein belongs to the DNA mismatch repair MutL/HexB family.

This protein is involved in the repair of mismatches in DNA. It is required for dam-dependent methyl-directed DNA mismatch repair. May act as a 'molecular matchmaker', a protein that promotes the formation of a stable complex between two or more DNA-binding proteins in an ATP-dependent manner without itself being part of a final effector complex. In Elusimicrobium minutum (strain Pei191), this protein is DNA mismatch repair protein MutL.